Here is an 81-residue protein sequence, read N- to C-terminus: Large ribosomal subunit protein bL31 (81 aa).

Residues cysteine 16, cysteine 18, cysteine 38, and cysteine 41 each contribute to the Zn(2+) site.

The protein belongs to the bacterial ribosomal protein bL31 family. Type A subfamily. In terms of assembly, part of the 50S ribosomal subunit. It depends on Zn(2+) as a cofactor.

In terms of biological role, binds the 23S rRNA. This Mycobacterium marinum (strain ATCC BAA-535 / M) protein is Large ribosomal subunit protein bL31.